The primary structure comprises 1465 residues: Gag-Pol polyprotein (1465 aa).

Glycine 2 carries the N-myristoyl glycine; by host lipid modification. Residues 7–31 (VLSGKKTDELEKVRLRPGGKKKYML) are interaction with Gp41. A Nuclear export signal motif is present at residues 16 to 22 (LEKVRLR). Positions 26 to 32 (KKKYMLK) match the Nuclear localization signal motif. The segment covering 105–114 (QRHLAADTEK) has biased composition (basic and acidic residues). Positions 105–129 (QRHLAADTEKMPATNKPTAPPSGGN) are disordered. Position 130 is a phosphotyrosine; by host (tyrosine 130). The segment at 186–223 (NCVGEHQAAMQIIREIINEEAADWDQQHPSPGPMPAGQ) is interaction with human PPIA/CYPA and NUP153. The tract at residues 274–360 (YNPTNILDIK…GGPGQKARLM (87 aa)) is dimerization/Multimerization of capsid protein p24. 2 consecutive CCHC-type zinc fingers follow at residues 388–405 (VTCWNCGKQGHTARQCRA) and 409–426 (QGCWKCGKTGHIMSKCPE). The disordered stretch occupies residues 441–508 (ASQLPHDPSA…PRETLQGGDR (68 aa)). The segment covering 484–501 (DAEKLHADGETTEREPRE) has biased composition (basic and acidic residues). Residues 513–517 (PQFSL) form a dimerization of protease region. The Peptidase A2 domain occupies 532–601 (VEVLLDTGVD…TPINIFGRNI (70 aa)). Residue aspartate 537 is the For protease activity; shared with dimeric partner of the active site. Dimerization of protease regions lie at residues 561–567 (GIGGFIN) and 600–612 (NILNTLGMTLNFP). The Reverse transcriptase domain occupies 655–844 (EGQLEEAPPT…PPFKWMGYEL (190 aa)). Aspartate 720, aspartate 795, and aspartate 796 together coordinate Mg(2+). The tract at residues 837-845 (FKWMGYELW) is RT 'primer grip'. Positions 1007-1023 (WDQWWTDYWQVTWIPEW) match the Tryptophan repeat motif motif. The region spanning 1043–1166 (LEGRETYYTD…VDHLVSQGIR (124 aa)) is the RNase H type-1 domain. Residues aspartate 1052, glutamate 1087, aspartate 1107, and aspartate 1158 each coordinate Mg(2+). The Integrase-type zinc-finger motif lies at 1172 to 1213 (EKIEPAQEEHEKYHGNVKELVHKFGIPQLVAKQIVNSCDKCQ). Histidine 1181, histidine 1185, cysteine 1209, and cysteine 1212 together coordinate Zn(2+). Residues 1222–1373 (QVNADLGTWQ…TPAERLVNMI (152 aa)) form the Integrase catalytic domain. Mg(2+)-binding residues include aspartate 1233, aspartate 1285, and glutamate 1321. A DNA-binding region (integrase-type) is located at residues 1392 to 1439 (FQVYYREGRDQLWKGPGELLWKGEGAVIIKVGTEIKVVPRRKAKIIRH).

Homotrimer; further assembles as hexamers of trimers. Interacts with gp41 (via C-terminus). Interacts with host CALM1; this interaction induces a conformational change in the Matrix protein, triggering exposure of the myristate group. Interacts with host AP3D1; this interaction allows the polyprotein trafficking to multivesicular bodies during virus assembly. Part of the pre-integration complex (PIC) which is composed of viral genome, matrix protein, Vpr and integrase. As to quaternary structure, homodimer; the homodimer further multimerizes as homohexamers or homopentamers. Interacts with human PPIA/CYPA. Interacts with human NUP153. Interacts with host PDZD8; this interaction stabilizes the capsid. Interacts with monkey TRIM5; this interaction destabilizes the capsid. In terms of assembly, homodimer, whose active site consists of two apposed aspartic acid residues. Heterodimer of p66 RT and p51 RT (RT p66/p51). Heterodimerization of RT is essential for DNA polymerase activity. The overall folding of the subdomains is similar in p66 RT and p51 RT but the spatial arrangements of the subdomains are dramatically different. As to quaternary structure, homotetramer; may further associate as a homohexadecamer. Part of the pre-integration complex (PIC) which is composed of viral genome, matrix protein, Vpr and integrase. Interacts with human SMARCB1/INI1 and human PSIP1/LEDGF isoform 1. Interacts with human KPNA3; this interaction might play a role in nuclear import of the pre-integration complex. Interacts with human NUP153; this interaction might play a role in nuclear import of the pre-integration complex. The cofactor is Mg(2+). In terms of processing, specific enzymatic cleavages by the viral protease yield mature proteins. The protease is released by autocatalytic cleavage. The polyprotein is cleaved during and after budding, this process is termed maturation. Proteolytic cleavage of p66 RT removes the RNase H domain to yield the p51 RT subunit. Nucleocapsid protein p7 might be further cleaved after virus entry.

The protein resides in the host cell membrane. Its subcellular location is the host endosome. It localises to the host multivesicular body. The protein localises to the virion membrane. It is found in the host nucleus. The protein resides in the host cytoplasm. Its subcellular location is the virion. It catalyses the reaction Endopeptidase for which the P1 residue is preferably hydrophobic.. The enzyme catalyses Endohydrolysis of RNA in RNA/DNA hybrids. Three different cleavage modes: 1. sequence-specific internal cleavage of RNA. Human immunodeficiency virus type 1 and Moloney murine leukemia virus enzymes prefer to cleave the RNA strand one nucleotide away from the RNA-DNA junction. 2. RNA 5'-end directed cleavage 13-19 nucleotides from the RNA end. 3. DNA 3'-end directed cleavage 15-20 nucleotides away from the primer terminus.. It carries out the reaction 3'-end directed exonucleolytic cleavage of viral RNA-DNA hybrid.. The catalysed reaction is DNA(n) + a 2'-deoxyribonucleoside 5'-triphosphate = DNA(n+1) + diphosphate. Its activity is regulated as follows. Protease: The viral protease is inhibited by many synthetic protease inhibitors (PIs), such as amprenavir, atazanavir, indinavir, loprinavir, nelfinavir, ritonavir and saquinavir. Use of protease inhibitors in tritherapy regimens permit more ambitious therapeutic strategies. Reverse transcriptase/ribonuclease H: RT can be inhibited either by nucleoside RT inhibitors (NRTIs) or by non nucleoside RT inhibitors (NNRTIs). NRTIs act as chain terminators, whereas NNRTIs inhibit DNA polymerization by binding a small hydrophobic pocket near the RT active site and inducing an allosteric change in this region. Classical NRTIs are abacavir, adefovir (PMEA), didanosine (ddI), lamivudine (3TC), stavudine (d4T), tenofovir (PMPA), zalcitabine (ddC), and zidovudine (AZT). Classical NNRTIs are atevirdine (BHAP U-87201E), delavirdine, efavirenz (DMP-266), emivirine (I-EBU), and nevirapine (BI-RG-587). The tritherapies used as a basic effective treatment of AIDS associate two NRTIs and one NNRTI. Mediates, with Gag polyprotein, the essential events in virion assembly, including binding the plasma membrane, making the protein-protein interactions necessary to create spherical particles, recruiting the viral Env proteins, and packaging the genomic RNA via direct interactions with the RNA packaging sequence (Psi). Gag-Pol polyprotein may regulate its own translation, by the binding genomic RNA in the 5'-UTR. At low concentration, the polyprotein would promote translation, whereas at high concentration, the polyprotein would encapsidate genomic RNA and then shut off translation. In terms of biological role, targets the polyprotein to the plasma membrane via a multipartite membrane-binding signal, that includes its myristoylated N-terminus. Matrix protein is part of the pre-integration complex. Implicated in the release from host cell mediated by Vpu. Binds to RNA. Its function is as follows. Forms the conical core that encapsulates the genomic RNA-nucleocapsid complex in the virion. Most core are conical, with only 7% tubular. The core is constituted by capsid protein hexamer subunits. The core is disassembled soon after virion entry. Host restriction factors such as TRIM5-alpha or TRIMCyp bind retroviral capsids and cause premature capsid disassembly, leading to blocks in reverse transcription. Capsid restriction by TRIM5 is one of the factors which restricts HIV-1 to the human species. Host PIN1 apparently facilitates the virion uncoating. On the other hand, interactions with PDZD8 or CYPA stabilize the capsid. Functionally, encapsulates and protects viral dimeric unspliced genomic RNA (gRNA). Binds these RNAs through its zinc fingers. Acts as a nucleic acid chaperone which is involved in rearangement of nucleic acid secondary structure during gRNA retrotranscription. Also facilitates template switch leading to recombination. As part of the polyprotein, participates in gRNA dimerization, packaging, tRNA incorporation and virion assembly. Aspartyl protease that mediates proteolytic cleavages of Gag and Gag-Pol polyproteins during or shortly after the release of the virion from the plasma membrane. Cleavages take place as an ordered, step-wise cascade to yield mature proteins. This process is called maturation. Displays maximal activity during the budding process just prior to particle release from the cell. Also cleaves Nef and Vif, probably concomitantly with viral structural proteins on maturation of virus particles. Hydrolyzes host EIF4GI and PABP1 in order to shut off the capped cellular mRNA translation. The resulting inhibition of cellular protein synthesis serves to ensure maximal viral gene expression and to evade host immune response. In terms of biological role, multifunctional enzyme that converts the viral RNA genome into dsDNA in the cytoplasm, shortly after virus entry into the cell. This enzyme displays a DNA polymerase activity that can copy either DNA or RNA templates, and a ribonuclease H (RNase H) activity that cleaves the RNA strand of RNA-DNA heteroduplexes in a partially processive 3' to 5' endonucleasic mode. Conversion of viral genomic RNA into dsDNA requires many steps. A tRNA(3)-Lys binds to the primer-binding site (PBS) situated at the 5'-end of the viral RNA. RT uses the 3' end of the tRNA primer to perform a short round of RNA-dependent minus-strand DNA synthesis. The reading proceeds through the U5 region and ends after the repeated (R) region which is present at both ends of viral RNA. The portion of the RNA-DNA heteroduplex is digested by the RNase H, resulting in a ssDNA product attached to the tRNA primer. This ssDNA/tRNA hybridizes with the identical R region situated at the 3' end of viral RNA. This template exchange, known as minus-strand DNA strong stop transfer, can be either intra- or intermolecular. RT uses the 3' end of this newly synthesized short ssDNA to perform the RNA-dependent minus-strand DNA synthesis of the whole template. RNase H digests the RNA template except for two polypurine tracts (PPTs) situated at the 5'-end and near the center of the genome. It is not clear if both polymerase and RNase H activities are simultaneous. RNase H probably can proceed both in a polymerase-dependent (RNA cut into small fragments by the same RT performing DNA synthesis) and a polymerase-independent mode (cleavage of remaining RNA fragments by free RTs). Secondly, RT performs DNA-directed plus-strand DNA synthesis using the PPTs that have not been removed by RNase H as primers. PPTs and tRNA primers are then removed by RNase H. The 3' and 5' ssDNA PBS regions hybridize to form a circular dsDNA intermediate. Strand displacement synthesis by RT to the PBS and PPT ends produces a blunt ended, linear dsDNA copy of the viral genome that includes long terminal repeats (LTRs) at both ends. Its function is as follows. Catalyzes viral DNA integration into the host chromosome, by performing a series of DNA cutting and joining reactions. This enzyme activity takes place after virion entry into a cell and reverse transcription of the RNA genome in dsDNA. The first step in the integration process is 3' processing. This step requires a complex comprising the viral genome, matrix protein, Vpr and integrase. This complex is called the pre-integration complex (PIC). The integrase protein removes 2 nucleotides from each 3' end of the viral DNA, leaving recessed CA OH's at the 3' ends. In the second step, the PIC enters cell nucleus. This process is mediated through integrase and Vpr proteins, and allows the virus to infect a non dividing cell. This ability to enter the nucleus is specific of lentiviruses, other retroviruses cannot and rely on cell division to access cell chromosomes. In the third step, termed strand transfer, the integrase protein joins the previously processed 3' ends to the 5' ends of strands of target cellular DNA at the site of integration. The 5'-ends are produced by integrase-catalyzed staggered cuts, 5 bp apart. A Y-shaped, gapped, recombination intermediate results, with the 5'-ends of the viral DNA strands and the 3' ends of target DNA strands remaining unjoined, flanking a gap of 5 bp. The last step is viral DNA integration into host chromosome. This involves host DNA repair synthesis in which the 5 bp gaps between the unjoined strands are filled in and then ligated. Since this process occurs at both cuts flanking the HIV genome, a 5 bp duplication of host DNA is produced at the ends of HIV-1 integration. Alternatively, Integrase may catalyze the excision of viral DNA just after strand transfer, this is termed disintegration. In Human immunodeficiency virus type 2 subtype B (isolate D205) (HIV-2), this protein is Gag-Pol polyprotein (gag-pol).